The following is a 248-amino-acid chain: MNQTNFGFKKVDYTKKQGLVNNVFSNVADKYDLMNDLMSLGLHRLWKDEFIRQIPNLNSHILDVASGSGDIALKLAKKARDRVNNISLTLSDINEEMLKQAKKKAIDLNLFQNLKFTVASAEELPFPDDSFDYYTIAFGIRNVPDINKALKEACRVLKPMGKFICLEFSKVKEGYIKDFYKFYSFNIIPSIGQMIAGNKEAYEYLVESIDLFPSQDEFRIMIKDAGFEEVGYKNLSGGIVAIHSAYTR.

2 residues coordinate S-adenosyl-L-methionine: Ser68 and Asp92.

It belongs to the class I-like SAM-binding methyltransferase superfamily. MenG/UbiE family.

The enzyme catalyses a 2-demethylmenaquinol + S-adenosyl-L-methionine = a menaquinol + S-adenosyl-L-homocysteine + H(+). It catalyses the reaction a 2-methoxy-6-(all-trans-polyprenyl)benzene-1,4-diol + S-adenosyl-L-methionine = a 5-methoxy-2-methyl-3-(all-trans-polyprenyl)benzene-1,4-diol + S-adenosyl-L-homocysteine + H(+). It functions in the pathway quinol/quinone metabolism; menaquinone biosynthesis; menaquinol from 1,4-dihydroxy-2-naphthoate: step 2/2. The protein operates within cofactor biosynthesis; ubiquinone biosynthesis. Its function is as follows. Methyltransferase required for the conversion of demethylmenaquinol (DMKH2) to menaquinol (MKH2) and the conversion of 2-polyprenyl-6-methoxy-1,4-benzoquinol (DDMQH2) to 2-polyprenyl-3-methyl-6-methoxy-1,4-benzoquinol (DMQH2). The sequence is that of Ubiquinone/menaquinone biosynthesis C-methyltransferase UbiE from Rickettsia rickettsii (strain Iowa).